A 108-amino-acid chain; its full sequence is Nucleoid-associated protein Bpet3552 (108 aa).

The protein belongs to the YbaB/EbfC family. As to quaternary structure, homodimer.

Its subcellular location is the cytoplasm. It is found in the nucleoid. Binds to DNA and alters its conformation. May be involved in regulation of gene expression, nucleoid organization and DNA protection. This Bordetella petrii (strain ATCC BAA-461 / DSM 12804 / CCUG 43448) protein is Nucleoid-associated protein Bpet3552.